The following is a 119-amino-acid chain: Achromolysin (119 aa).

The protein belongs to the peptidase M4 family. It depends on Ca(2+) as a cofactor. Requires Zn(2+) as cofactor.

Its subcellular location is the secreted. Has staphylolytic activity. The protein is Achromolysin of Achromobacter lyticus.